The sequence spans 747 residues: AT-rich interactive domain-containing protein 4 (747 aa).

Residues 454–475 are disordered; it reads PLPTRKRSEPCRESKEIENGGP. Residues 459–471 show a composition bias toward basic and acidic residues; it reads KRSEPCRESKEIE. The 105-residue stretch at 566 to 670 folds into the ARID domain; that stretch reads VCSEEEFLRD…YLLEYEYAHD (105 aa). The PHD-type zinc finger occupies 674 to 730; the sequence is GECCLICRSSTAGDWVNCGSCGEWAHFGCDRRPGLGAFKDYAKTDGLEYVCPNCSVS.

The protein resides in the nucleus. The polypeptide is AT-rich interactive domain-containing protein 4 (ARID4) (Arabidopsis thaliana (Mouse-ear cress)).